Here is a 235-residue protein sequence, read N- to C-terminus: Thaumatin I (235 aa).

The signal sequence occupies residues 1-22; the sequence is MAATTCFFFLFPFLLLLTLSRA. Intrachain disulfides connect cysteine 31/cysteine 226, cysteine 78/cysteine 88, cysteine 93/cysteine 99, cysteine 143/cysteine 215, cysteine 148/cysteine 199, cysteine 156/cysteine 167, cysteine 171/cysteine 180, and cysteine 181/cysteine 186. Residues 230 to 235 constitute a propeptide, removed in mature form; the sequence is LELEDE.

It belongs to the thaumatin family.

It localises to the cytoplasmic vesicle. Functionally, taste-modifying protein; intensely sweet-tasting. It is 100000 times sweeter than sucrose on a molar basis. The sequence is that of Thaumatin I from Thaumatococcus daniellii (Katemfe).